The sequence spans 109 residues: NAD(P)H-quinone oxidoreductase subunit M (109 aa).

The protein belongs to the complex I NdhM subunit family. As to quaternary structure, NDH-1 can be composed of about 15 different subunits; different subcomplexes with different compositions have been identified which probably have different functions.

Its subcellular location is the cellular thylakoid membrane. The enzyme catalyses a plastoquinone + NADH + (n+1) H(+)(in) = a plastoquinol + NAD(+) + n H(+)(out). The catalysed reaction is a plastoquinone + NADPH + (n+1) H(+)(in) = a plastoquinol + NADP(+) + n H(+)(out). In terms of biological role, NDH-1 shuttles electrons from an unknown electron donor, via FMN and iron-sulfur (Fe-S) centers, to quinones in the respiratory and/or the photosynthetic chain. The immediate electron acceptor for the enzyme in this species is believed to be plastoquinone. Couples the redox reaction to proton translocation, and thus conserves the redox energy in a proton gradient. Cyanobacterial NDH-1 also plays a role in inorganic carbon-concentration. This chain is NAD(P)H-quinone oxidoreductase subunit M, found in Microcystis aeruginosa (strain NIES-843 / IAM M-2473).